Consider the following 539-residue polypeptide: uncharacterized protein (539 aa).

The active-site Acyl-ester intermediate is Ser-216.

This sequence belongs to the type-B carboxylesterase/lipase family.

It localises to the cytoplasm. The protein localises to the nucleus. This is an uncharacterized protein from Schizosaccharomyces pombe (strain 972 / ATCC 24843) (Fission yeast).